A 288-amino-acid chain; its full sequence is Syntaxin-1A (288 aa).

The segment covering 1 to 13 has biased composition (basic and acidic residues); it reads MKDRTQELRTAKD. The segment at 1-20 is disordered; sequence MKDRTQELRTAKDSDDDDDV. Topologically, residues 1-265 are cytoplasmic; the sequence is MKDRTQELRT…KYQSKARRKK (265 aa). A phosphoserine mark is found at S14, S64, and S95. The stretch at 68–109 forms a coiled coil; it reads DEKTKEELEELMSDIKKTANKVRSKLKSIEQSIEQEEGLNRS. S188 carries the post-translational modification Phosphoserine; by DAPK1. The region spanning 192-254 is the t-SNARE coiled-coil homology domain; that stretch reads LSEIETRHSE…ERAVSDTKKA (63 aa). Residues K252, K253, and K256 each participate in a glycyl lysine isopeptide (Lys-Gly) (interchain with G-Cter in SUMO) cross-link. A helical; Anchor for type IV membrane protein membrane pass occupies residues 266–286; that stretch reads IMIIICCVILGIIIASTIGGI. Residues 287-288 lie on the Extracellular side of the membrane; it reads FG.

The protein belongs to the syntaxin family. In terms of assembly, part of the SNARE core complex containing SNAP25, VAMP2 and STX1A; this complex constitutes the basic catalytic machinery of the complex neurotransmitter release apparatus. The SNARE complex interacts with CPLX1. Interacts with STXBP1. The interaction with STXBP1 promotes assembly of the SNARE complex. Interacts (via C-terminus) with KCNB1 (via C-terminus); the interaction increases in a calcium-dependent manner and induces a pore-independent enhancement of exocytosis in neuroendocrine cells, chromaffin cells, pancreatic beta cells and from the soma of dorsal root ganglia (DRG) neurons. Interacts with SYTL4. Interacts with STXBP6. Interacts with PLCL1 (via C2 domain). Interacts with OTOF. Interacts with LGI3. Interacts (via the H3 domain) with SLC6A4 (via the N-terminus); this interaction regulates SLC4A6 channel conductance in thalamocortical neurons. Interacts with SYT6 and SYT8; the interaction is Ca(2+)-dependent. Interacts with VAMP8. Interacts with SNAP23. Interacts with VAPA and SYBU. Interacts with PRRT2. Interacts with SEPT8. Interacts with STXBP5L. Interacts with synaptotagmin-1/SYT1. Interacts with SEPTIN5; in the cerebellar cortex. Interacts with SEPTIN4; in the striatum. In terms of processing, phosphorylated by CK2. Phosphorylation at Ser-188 by DAPK1 significantly decreases its interaction with STXBP1. Post-translationally, phosphorylated by CK2. Phosphorylation at Ser-188 by DAPK1 significantly decreases its interaction with STXBP1. Sumoylated, sumoylation is required for regulation of synaptic vesicle endocytosis. Expressed in the striatum (at protein level). Expressed in the ileum.

Its subcellular location is the cytoplasmic vesicle. It is found in the secretory vesicle. The protein localises to the synaptic vesicle membrane. The protein resides in the synapse. It localises to the synaptosome. Its subcellular location is the cell membrane. In terms of biological role, plays an essential role in hormone and neurotransmitter calcium-dependent exocytosis and endocytosis. Part of the SNARE (Soluble NSF Attachment Receptor) complex composed of SNAP25, STX1A and VAMP2 which mediates the fusion of synaptic vesicles with the presynaptic plasma membrane. STX1A and SNAP25 are localized on the plasma membrane while VAMP2 resides in synaptic vesicles. The pairing of the three SNAREs from the N-terminal SNARE motifs to the C-terminal anchors leads to the formation of the SNARE complex, which brings membranes into close proximity and results in final fusion. Participates in the calcium-dependent regulation of acrosomal exocytosis in sperm. Also plays an important role in the exocytosis of hormones such as insulin or glucagon-like peptide 1 (GLP-1). The protein is Syntaxin-1A (Stx1a) of Mus musculus (Mouse).